The primary structure comprises 1275 residues: MKRIPRKTKGKSSGKGNDSTERSDDGSSQLRDKQNNKAGPATTEPGTSNREQYRARPGIASVQRATESAELPMKNNDEGTPDKKGNTRGDLVNEHSEAKDEADEATQKQAKDTDKSKAQVTYSDTGINNANELSRSGNVDNEGGSNQKPMSTRIAEATSAIVSKHPARVGLPPTASSGHGYQCHVCSAVLFSPLDLDAHVASHGLHGNMTLTSSEIQRHITEFISSWQNHPIVQVSADVENKKTAQLLHADTPRLVTWDAGLCTSFKIVPIVPAQVPQDVLAYTFFTSSYAIQSPFPEAAVSRIVVHTRWASNVDFDRDSSVIMAPPTENNIHLFKQLLNTETLSVRGANPLMFRANVLHMLLEFVLDNLYLNRHTGFSQDHTPFTEGANLRSLPGPDAEKWYSIMYPTRMGTPNVSKICNFVASCVRNRVGRFDRAQMMNGAMSEWVDVFETSDALTVSIRGRWMARLARMNINPTEIEWALTECAQGYVTVTSPYAPSVNRLMPYRISNAERQISQIIRIMNIGNNATVIQPVLQDISVLLQRISPLQIDPTIISNTMSTVSESTTQTLSPASSILGKLRPSNSDFSSFRVALAGWLYNGVVTTVIDDSSYPKDGGSVTSLENLWDFFILALALPLTTDPCAPVKAFMTLANMMVGFETIPMDNQIYTQSRRASAFSTPHTWPRCFMNIQLISPIDAPILRQWAEIIHRYWPNPSQIRYGAPNVFGSANLFTPPEVLLLPIDHQPANVTTPTLDFTNELTNWRARVCELMKNLVDNQRYQPGWTQSLVSSMRGTLDKLKLIKSMTPMYLQQLAPVELAVIAPMLPFPPFQVPYVRLDRDRVPTMVGVTRQSRDTITQPALSLSTTNTTVGVPLALDARAITVALLSGKYPPDLVTNVWYADAIYPMYADTEVFSNLQRDMITCEAVQTLVTLVAQISETQYPVDRYLDWIPSLRASAATAATFAEWVNTSMKTAFDLSDMLLEPLLSGDPRMTQLAIQYQQYNGRTFNVIPEMPGSVIADCVQLTAEVFNHEYNLFGIARGDIIIGRVQSTHLWSPLAPPPDLVFDRDTPGVHIFGRDCRISFGMNGAAPMIRDETGMMVPFEGNWIFPLALWQMNTRYFNQQFDAWIKTGELRIRIEMGAYPYMLHYYDPRQYANAWNLTSAWLEEITPTSIPSVPFMVPISSDHDISSAPAVQYIISTEYNDRSLFCTNSSSPQTIAGPDKHIPVERYNILTNPDAPPTQIQLPEVVDLYNVVTRYAYETPPITAVVMGVP.

Positions 1 to 12 (MKRIPRKTKGKS) are enriched in basic residues. The interval 1–149 (MKRIPRKTKG…DNEGGSNQKP (149 aa)) is disordered. Composition is skewed to basic and acidic residues over residues 18-35 (DSTERSDDGSSQLRDKQN) and 75-117 (NNDE…DKSK). The segment covering 118 to 149 (AQVTYSDTGINNANELSRSGNVDNEGGSNQKP) has biased composition (polar residues). The C2H2-type zinc-finger motif lies at 181-203 (YQCHVCSAVLFSPLDLDAHVASH).

This sequence belongs to the turreted BTV-fold inner capsid family. Homodecamer; each decamer is made up of two conformers of VP2, called VP2A and VP2B. 12 homodecamers assemble to form an icosahedral capsid. Interacts with protein mu-NS; in viral inclusions. It depends on Mg(2+) as a cofactor. Mn(2+) is required as a cofactor.

It localises to the virion. It carries out the reaction ATP + H2O = ADP + phosphate + H(+). In terms of biological role, inner capsid protein that self-assembles to form an icosahedral capsid with a T=2 symmetry, which consists of 120 copies of VP2, with channels at each of its five-fold vertices. This capsid constitutes the innermost concentric layer of the viral mature particle. Functionally, displays NTPase, RNA 5'-triphosphatase (RTPase) and RNA helicase activities and probably participates in transcription of the viral genome. Helicase activity might be involved in unwinding or reannealing dsRNA during RNA synthesis. RTPase enzymatic activity represents the first step in RNA capping, which yields a 5'-diphosphorylated plus-strand RNA. This chain is Inner capsid protein lambda-1 (L3), found in Reovirus type 1 (strain Lang) (T1L).